The sequence spans 477 residues: MCTGVRVRGITATAVSKILLDKGYRIVQASNIIRERFNLPLDTSPADVTVKDADKDELLVLGFYGHADKVYNDLVDELEYSFKWVSPVGLHSIHLGLIRDRVGDKCIVEIGNNVKGVLPRCNMDIGKKVLVGVAKAPIKPGEEALLTRSIRVVGKYVSIIYGKPSLTISEHIRDHDKREYLLAIAMSKIMGSGLGVHLRSSSQYAGKDEIEREIDELKQKLRELLDKAKHIEDAPTILYEGEFIGLIGLTSLAKEKLDSYRDKVVPTITRHHSLKSCDNVMSDIVDYSEILLRHGISRKIIYDALSDYILEKNRSLPKIRIIHIKPDGTTHTLSPGTIYEIVKSEKGVKIVLKRTLRNIGVYDGLGVEKKPGDIDYMVIEENSWIISHNYYRGNEWLGSYININTPPEILPGIIKYHDLLIDVIVKNTGEARIIDEEELKTYYEKEIIPEKLYEKALEVAKSILENHRLLIYRPNQQ.

Belongs to the FAU-1 family.

Functionally, probable RNase involved in rRNA stability through maturation and/or degradation of precursor rRNAs. Binds to RNA in loop regions with AU-rich sequences. In Staphylothermus marinus (strain ATCC 43588 / DSM 3639 / JCM 9404 / F1), this protein is Probable ribonuclease FAU-1.